Reading from the N-terminus, the 321-residue chain is Non-canonical heme oxygenase HOZ, chloroplastic (321 aa).

Residues 1–45 (MKSLVAHFSTPLITARLVPRCIIHRASISAVSFSTVRRRFSPLTM) constitute a chloroplast transit peptide. A dimerization region spans residues 96-116 (CGMLSTFSQKYEGYPSGSMVD). Heme b-binding residues include Ser130, Val134, and His135. Dimerization regions lie at residues 144 to 166 (KCSLLIARDPEDRTGLRITLHGD) and 205 to 208 (KVVR).

Homodimer. Binds to heme in the interdimer interface; the heme iron is coordinated by a fixed water molecule.

The protein resides in the plastid. Its subcellular location is the chloroplast. In terms of biological role, dimeric beta-barrel protein binding to heme and catalyzing its degradation to produce biliverdin. May function in the tetrapyrrole biosynthetic pathway. The chain is Non-canonical heme oxygenase HOZ, chloroplastic from Arabidopsis thaliana (Mouse-ear cress).